Here is a 267-residue protein sequence, read N- to C-terminus: Protein BMH1 (267 aa).

Ser-2 carries the post-translational modification N-acetylserine. Lys-76 participates in a covalent cross-link: Glycyl lysine isopeptide (Lys-Gly) (interchain with G-Cter in ubiquitin). Ser-89 carries the post-translational modification Phosphoserine. Positions 236-267 (DMSESGQAEDQQQQQQHQQQQPPAAAEGEAPK) are disordered. The segment covering 243-267 (AEDQQQQQQHQQQQPPAAAEGEAPK) has biased composition (low complexity).

It belongs to the 14-3-3 family. Homodimer. Interacts with NTH1 (via N-terminus when phosphorylated by PKA); the interaction is direct and activates NTH1. Interacts with FIN1.

In terms of biological role, involved in growth regulation. This Saccharomyces cerevisiae (strain ATCC 204508 / S288c) (Baker's yeast) protein is Protein BMH1 (BMH1).